The primary structure comprises 163 residues: tRNA-acetylating toxin 2 (163 aa).

The active site involves Y137.

This sequence belongs to the acetyltransferase family. GNAT subfamily. In terms of assembly, homodimer. Forms a complex with cognate antitoxin TacA2.

The catalysed reaction is glycyl-tRNA(Gly) + acetyl-CoA = N-acetylglycyl-tRNA(Gly) + CoA + H(+). It catalyses the reaction L-isoleucyl-tRNA(Ile) + acetyl-CoA = N-acetyl-L-isoleucyl-tRNA(Ile) + CoA + H(+). It carries out the reaction L-leucyl-tRNA(Leu) + acetyl-CoA = N-acetyl-L-leucyl-tRNA(Leu) + CoA + H(+). Toxic component of a type II toxin-antitoxin (TA) system. Acetylates tRNA and inhibits translation. Acetylates mainly Gly and Ile/Leu in vitro. Overexpression during the lag phase of a tacA2-tacT2 deletion strain leads to a 100-fold increase in persister cells in the presence of cefotaxime and a non-growth state in the absence of antibiotic. This protein, which has a single amino acid compared to S.typhimurium strain 14028s (Lys-29 is Glu in 14028s), produces 100-fold more persister cells, has much higher acetylation activity and binds tRNA much better. Persister cell formation and the growth defect are neutralized by cognate antitoxin TacA2. In terms of biological role, the TacA2-TacT2 complex both represses and derepresses expression of its own operon. This is tRNA-acetylating toxin 2 from Salmonella enteritidis.